A 485-amino-acid chain; its full sequence is Bifunctional protein HldE (485 aa).

Residues 1 to 326 are ribokinase; it reads MDFSSTRVLC…AELDESAISN (326 aa). 195–198 lines the ATP pocket; sequence NVKE. Residue aspartate 271 is part of the active site. Positions 354-485 are cytidylyltransferase; it reads FTNGCFDILH…GIVKKISTLT (132 aa).

In the N-terminal section; belongs to the carbohydrate kinase PfkB family. The protein in the C-terminal section; belongs to the cytidylyltransferase family. Homodimer.

It carries out the reaction D-glycero-beta-D-manno-heptose 7-phosphate + ATP = D-glycero-beta-D-manno-heptose 1,7-bisphosphate + ADP + H(+). It catalyses the reaction D-glycero-beta-D-manno-heptose 1-phosphate + ATP + H(+) = ADP-D-glycero-beta-D-manno-heptose + diphosphate. It functions in the pathway nucleotide-sugar biosynthesis; ADP-L-glycero-beta-D-manno-heptose biosynthesis; ADP-L-glycero-beta-D-manno-heptose from D-glycero-beta-D-manno-heptose 7-phosphate: step 1/4. Its pathway is nucleotide-sugar biosynthesis; ADP-L-glycero-beta-D-manno-heptose biosynthesis; ADP-L-glycero-beta-D-manno-heptose from D-glycero-beta-D-manno-heptose 7-phosphate: step 3/4. Functionally, catalyzes the phosphorylation of D-glycero-D-manno-heptose 7-phosphate at the C-1 position to selectively form D-glycero-beta-D-manno-heptose-1,7-bisphosphate. In terms of biological role, catalyzes the ADP transfer from ATP to D-glycero-beta-D-manno-heptose 1-phosphate, yielding ADP-D-glycero-beta-D-manno-heptose. In Granulibacter bethesdensis (strain ATCC BAA-1260 / CGDNIH1), this protein is Bifunctional protein HldE.